Here is a 917-residue protein sequence, read N- to C-terminus: Probable dipeptidyl-aminopeptidase B (917 aa).

Basic and acidic residues predominate over residues 1–16 (MATEKGHGRDDEERVP). Positions 1–21 (MATEKGHGRDDEERVPLTRGS) are disordered. The Cytoplasmic segment spans residues 1–99 (MATEKGHGRD…KPMHKSVKIA (99 aa)). A helical; Signal-anchor for type II membrane protein transmembrane segment spans residues 100–120 (LWTLLFLSLGGWSLAFVLFIF). The Vacuolar segment spans residues 121-917 (RSHDTYETPI…RAATWAGLSI (797 aa)). N-linked (GlcNAc...) asparagine glycosylation is found at Asn135, Asn351, and Asn574. The Charge relay system role is filled by Ser756. N-linked (GlcNAc...) asparagine glycosylation occurs at Asn815. Catalysis depends on charge relay system residues Asp833 and His866. Residue Asn902 is glycosylated (N-linked (GlcNAc...) asparagine).

This sequence belongs to the peptidase S9B family.

It localises to the vacuole membrane. The enzyme catalyses Release of an N-terminal dipeptide, Xaa-Yaa-|-Zaa-, from a polypeptide, preferentially when Yaa is Pro, provided Zaa is neither Pro nor hydroxyproline.. Its function is as follows. Type IV dipeptidyl-peptidase which removes N-terminal dipeptides sequentially from polypeptides having unsubstituted N-termini provided that the penultimate residue is proline. This Ajellomyces capsulatus (strain H88) (Darling's disease fungus) protein is Probable dipeptidyl-aminopeptidase B (DAPB).